The chain runs to 646 residues: Beta-galactosidase-1-like protein (646 aa).

A signal peptide spans 1–23 (MPPDLPSLLLRLVVLLLLSQAEA). A glycan (N-linked (GlcNAc...) asparagine) is linked at asparagine 93. Glutamate 182 serves as the catalytic Proton donor. Residue asparagine 239 is glycosylated (N-linked (GlcNAc...) asparagine). The active-site Nucleophile is glutamate 260.

The protein belongs to the glycosyl hydrolase 35 family.

The protein resides in the secreted. Probable glycosyl hydrolase. The chain is Beta-galactosidase-1-like protein (Glb1l) from Mus musculus (Mouse).